A 184-amino-acid polypeptide reads, in one-letter code: MLPNLVILDVTEPRKPSSSAGIRQLTADQIQMLRAFIQKRVKNADDVDDILQCVFLEALRNEHKFQHASKPQTWLCGIALNLIRNHFRKMYRQPYQESWEDDVHTDLEWHGDITHQVDGHRQLARVIEAIDCLPTNMQKVLEVSLEMDGNYQETANTLGVPIGTVRSRLSRARVQLKQQIDPFA.

The short motif at 49 to 62 (DILQCVFLEALRNE) is the Polymerase core binding element. A DNA-binding region (H-T-H motif) is located at residues 151-170 (YQETANTLGVPIGTVRSRLS).

This sequence belongs to the sigma-70 factor family. ECF subfamily.

Its function is as follows. Sigma factors are initiation factors that promote the attachment of RNA polymerase to specific initiation sites and are then released. This sigma factor is involved in the activation of hprD as well as other hrp loci which are involved in plant pathogenicity, hrmA and avr genes. The polypeptide is RNA polymerase sigma factor HrpL (hrpL) (Pseudomonas syringae pv. syringae).